Here is an 894-residue protein sequence, read N- to C-terminus: Alpha-actinin-2 (894 aa).

The tract at residues 1-254 is actin-binding; that stretch reads MNQIEPGVQY…IMTYVSCFYH (254 aa). 2 Calponin-homology (CH) domains span residues 38 to 142 and 151 to 257; these read KQQR…LRFA and TSAK…HAFA. Residue Thr237 is modified to Phosphothreonine. Spectrin repeat units lie at residues 281–391, 401–506, 516–627, and 637–740; these read RLME…WLLN, HLAE…ALER, QLHL…SLQE, and RLRR…EVET. 2 EF-hand domains span residues 753–788 and 789–824; these read EQMNEFRASFNHFDRRKNGLMDHEDFRACLISMGYD and LGEAEFARIMTLVDPNGQGTVTFQSFIDFMTRETAD. Positions 766, 770, 777, 802, 804, and 808 each coordinate Ca(2+).

The protein belongs to the alpha-actinin family. Homodimer; antiparallel. Also forms heterodimers with ACTN3. Interacts with ADAM12, MYOZ1, MYOZ2 and MYOZ3. Interacts via its C-terminal region with the LDB3 PDZ domain. Interacts with XIRP2. Interacts with DST isoform 1 (via N-terminus). Interacts with PARVB. Interacts with SYNPO2. In terms of processing, ubiquitinated by FBXL22, leading to proteasomal degradation. As to expression, expressed in both skeletal and cardiac muscle.

The protein localises to the cytoplasm. It localises to the myofibril. The protein resides in the sarcomere. Its subcellular location is the z line. Its function is as follows. F-actin cross-linking protein which is thought to anchor actin to a variety of intracellular structures. This is a bundling protein. The protein is Alpha-actinin-2 (ACTN2) of Homo sapiens (Human).